A 247-amino-acid polypeptide reads, in one-letter code: Probable transcriptional regulatory protein Asuc_1803 (247 aa).

Belongs to the TACO1 family.

It is found in the cytoplasm. The sequence is that of Probable transcriptional regulatory protein Asuc_1803 from Actinobacillus succinogenes (strain ATCC 55618 / DSM 22257 / CCUG 43843 / 130Z).